We begin with the raw amino-acid sequence, 87 residues long: Omega-lycotoxin-Am1d (87 aa).

Positions Met1–Cys17 are cleaved as a signal peptide. Residues Gln18 to Arg40 constitute a propeptide that is removed on maturation. Disulfide bonds link Cys44–Cys59, Cys51–Cys64, Cys58–Cys84, and Cys66–Cys82.

It belongs to the neurotoxin omega-lctx family. Expressed by the venom gland.

It is found in the secreted. Its function is as follows. Modulates Cav2.1/CACNA1A voltage-gated calcium channels (P/Q-type currents) in rat cerebellar Purkinje cells and hippocampal CA1-CA3 neurons. At saturating concentrations (&gt;10 nM) decelerates activation kinetics and slightly increases peak amplitude without affecting deactivation kinetics. In vivo, does not cause death when intravenously injected into mice. In rat models, through its activity on Cav2.1/CACNA1A, has an ameliorative effect on memory defects provoked by hyperstimulation of N-methyl-D-aspartate receptors (NMDARs) in the hippocampus. The polypeptide is Omega-lycotoxin-Am1d (Alopecosa marikovskyi (Wolf spider)).